Here is a 388-residue protein sequence, read N- to C-terminus: Glucose-1-phosphate adenylyltransferase (388 aa).

Residues Y100, G165, 180-181 (EK), and S191 each bind alpha-D-glucose 1-phosphate.

The protein belongs to the bacterial/plant glucose-1-phosphate adenylyltransferase family. Homotetramer.

The catalysed reaction is alpha-D-glucose 1-phosphate + ATP + H(+) = ADP-alpha-D-glucose + diphosphate. It functions in the pathway glycan biosynthesis; glycogen biosynthesis. Its function is as follows. Involved in the biosynthesis of ADP-glucose, a building block required for the elongation reactions to produce glycogen. Catalyzes the reaction between ATP and alpha-D-glucose 1-phosphate (G1P) to produce pyrophosphate and ADP-Glc. In Clostridium perfringens (strain SM101 / Type A), this protein is Glucose-1-phosphate adenylyltransferase.